The primary structure comprises 58 residues: MPKHAQVKPHLLYEWDYEKGIIKPKNKRCPRCGSFMAHHLKPVPRWHCGKCGYTIFEK.

Residues C29, C32, C48, and C51 each coordinate Zn(2+). A C4-type zinc finger spans residues 29–51 (CPRCGSFMAHHLKPVPRWHCGKC).

Belongs to the eukaryotic ribosomal protein eS31 family. Part of the 30S ribosomal subunit. It depends on Zn(2+) as a cofactor.

This is Small ribosomal subunit protein eS31 from Ignicoccus hospitalis (strain KIN4/I / DSM 18386 / JCM 14125).